Consider the following 376-residue polypeptide: Lipoprotein p33 (376 aa).

The N-terminal stretch at 1 to 30 is a signal peptide; it reads MKIKKIKLLKALALTGAFGIVATVPVIVSS. A lipid anchor (N-palmitoyl cysteine) is attached at C31. The S-diacylglycerol cysteine moiety is linked to residue C31. Residues 33–59 are disordered; sequence STDNNGGTGDNNTGGGGSGTDQQQGTT. Positions 38-51 are enriched in gly residues; sequence GGTGDNNTGGGGSG.

Belongs to the p35 lipoprotein family.

The protein resides in the cell membrane. This Malacoplasma penetrans (strain HF-2) (Mycoplasma penetrans) protein is Lipoprotein p33.